The following is a 345-amino-acid chain: Annexin A9 (345 aa).

Annexin repeat units lie at residues 41–112 (FSVD…ALLQ), 113–184 (PTAQ…ALAK), 197–266 (NLAE…GLAS), and 270–341 (NTPL…ALCR).

This sequence belongs to the annexin family. Homodimer. In terms of tissue distribution, expressed in the stratified squamous skin epithelium, but not in epithelia of other types (at protein level).

Functionally, low affinity receptor for acetylcholine known to be targeted by disease-causing pemphigus vulgaris antibodies in keratinocytes. In Homo sapiens (Human), this protein is Annexin A9 (ANXA9).